A 158-amino-acid chain; its full sequence is Transcription elongation factor GreA (158 aa).

Residues Ala-47 to Glu-68 adopt a coiled-coil conformation.

Belongs to the GreA/GreB family.

Necessary for efficient RNA polymerase transcription elongation past template-encoded arresting sites. The arresting sites in DNA have the property of trapping a certain fraction of elongating RNA polymerases that pass through, resulting in locked ternary complexes. Cleavage of the nascent transcript by cleavage factors such as GreA or GreB allows the resumption of elongation from the new 3'terminus. GreA releases sequences of 2 to 3 nucleotides. The sequence is that of Transcription elongation factor GreA from Flavobacterium johnsoniae (strain ATCC 17061 / DSM 2064 / JCM 8514 / BCRC 14874 / CCUG 350202 / NBRC 14942 / NCIMB 11054 / UW101) (Cytophaga johnsonae).